A 347-amino-acid polypeptide reads, in one-letter code: Biotin synthase (347 aa).

Residues alanine 40–arginine 258 enclose the Radical SAM core domain. Residues cysteine 55, cysteine 59, and cysteine 62 each coordinate [4Fe-4S] cluster. 4 residues coordinate [2Fe-2S] cluster: cysteine 99, cysteine 130, cysteine 190, and arginine 262.

This sequence belongs to the radical SAM superfamily. Biotin synthase family. As to quaternary structure, homodimer. [4Fe-4S] cluster is required as a cofactor. It depends on [2Fe-2S] cluster as a cofactor.

The catalysed reaction is (4R,5S)-dethiobiotin + (sulfur carrier)-SH + 2 reduced [2Fe-2S]-[ferredoxin] + 2 S-adenosyl-L-methionine = (sulfur carrier)-H + biotin + 2 5'-deoxyadenosine + 2 L-methionine + 2 oxidized [2Fe-2S]-[ferredoxin]. It functions in the pathway cofactor biosynthesis; biotin biosynthesis; biotin from 7,8-diaminononanoate: step 2/2. Catalyzes the conversion of dethiobiotin (DTB) to biotin by the insertion of a sulfur atom into dethiobiotin via a radical-based mechanism. The polypeptide is Biotin synthase (Stenotrophomonas maltophilia (strain K279a)).